The sequence spans 112 residues: 2Fe-2S ferredoxin (112 aa).

Positions 1-104 (MPQIVILPHA…DLVVEIPKYT (104 aa)) constitute a 2Fe-2S ferredoxin-type domain. Residues cysteine 42, cysteine 48, cysteine 51, and cysteine 87 each coordinate [2Fe-2S] cluster.

The protein belongs to the adrenodoxin/putidaredoxin family. Requires [2Fe-2S] cluster as cofactor.

In terms of biological role, ferredoxin are iron-sulfur proteins that transfer electrons in a wide variety of metabolic reactions. This Pseudomonas aeruginosa (strain ATCC 15692 / DSM 22644 / CIP 104116 / JCM 14847 / LMG 12228 / 1C / PRS 101 / PAO1) protein is 2Fe-2S ferredoxin (fdx).